Reading from the N-terminus, the 296-residue chain is Probable lipid kinase YegS-like (296 aa).

The 130-residue stretch at 1–130 folds into the DAGKc domain; it reads MPHTLLILNG…IDLAQVNDKH (130 aa). Residues Thr-37, 63–69, and Thr-92 each bind ATP; that span reads GDGTINE. Positions 212, 215, and 217 each coordinate Mg(2+). The active-site Proton acceptor is the Glu-268.

Belongs to the diacylglycerol/lipid kinase family. YegS lipid kinase subfamily. It depends on Mg(2+) as a cofactor. Requires Ca(2+) as cofactor.

The protein localises to the cytoplasm. Probably phosphorylates lipids; the in vivo substrate is unknown. This chain is Probable lipid kinase YegS-like, found in Yersinia enterocolitica serotype O:8 / biotype 1B (strain NCTC 13174 / 8081).